The chain runs to 223 residues: Endonuclease V (223 aa).

2 residues coordinate Mg(2+): aspartate 35 and aspartate 103.

The protein belongs to the endonuclease V family. The cofactor is Mg(2+).

The protein resides in the cytoplasm. It catalyses the reaction Endonucleolytic cleavage at apurinic or apyrimidinic sites to products with a 5'-phosphate.. Functionally, DNA repair enzyme involved in the repair of deaminated bases. Selectively cleaves double-stranded DNA at the second phosphodiester bond 3' to a deoxyinosine leaving behind the intact lesion on the nicked DNA. The protein is Endonuclease V of Escherichia coli O45:K1 (strain S88 / ExPEC).